We begin with the raw amino-acid sequence, 341 residues long: Methionine import ATP-binding protein MetN 1 (341 aa).

An ABC transporter domain is found at isoleucine 2 to valine 241. An ATP-binding site is contributed by glycine 38–serine 45.

This sequence belongs to the ABC transporter superfamily. Methionine importer (TC 3.A.1.24) family. In terms of assembly, the complex is composed of two ATP-binding proteins (MetN), two transmembrane proteins (MetI) and a solute-binding protein (MetQ).

Its subcellular location is the cell membrane. The catalysed reaction is L-methionine(out) + ATP + H2O = L-methionine(in) + ADP + phosphate + H(+). It catalyses the reaction D-methionine(out) + ATP + H2O = D-methionine(in) + ADP + phosphate + H(+). Its function is as follows. Part of the ABC transporter complex MetNIQ involved in methionine import. Responsible for energy coupling to the transport system. The sequence is that of Methionine import ATP-binding protein MetN 1 from Staphylococcus epidermidis (strain ATCC 35984 / DSM 28319 / BCRC 17069 / CCUG 31568 / BM 3577 / RP62A).